We begin with the raw amino-acid sequence, 104 residues long: Putative heat shock protein PS1 (104 aa).

Residues Asn-11 and Asn-18 are each glycosylated (N-linked (GlcNAc...) asparagine). Asn-18 serves as a coordination point for ATP.

Belongs to the heat shock protein 90 family. In terms of assembly, homodimer.

It is found in the cytoplasm. Functionally, putative molecular chaperone that may promote the maturation, structural maintenance and proper regulation of specific target proteins. The chain is Putative heat shock protein PS1 from Pinus strobus (Eastern white pine).